A 347-amino-acid chain; its full sequence is Selenide, water dikinase (347 aa).

C17 is an active-site residue. Residues K20 and 48–50 (TRD) contribute to the ATP site. A Mg(2+)-binding site is contributed by D51. ATP contacts are provided by residues D68, D91, and 139–141 (GHS). Residue D91 participates in Mg(2+) binding. A Mg(2+)-binding site is contributed by D227.

This sequence belongs to the selenophosphate synthase 1 family. Class I subfamily. Homodimer. It depends on Mg(2+) as a cofactor.

It carries out the reaction hydrogenselenide + ATP + H2O = selenophosphate + AMP + phosphate + 2 H(+). Synthesizes selenophosphate from selenide and ATP. This Salmonella typhi protein is Selenide, water dikinase.